The following is a 502-amino-acid chain: ATP synthase subunit alpha, sodium ion specific (502 aa).

Position 169 to 176 (169 to 176 (GDRQTGKT)) interacts with ATP.

The protein belongs to the ATPase alpha/beta chains family. As to quaternary structure, F-type ATPases have 2 components, CF(1) - the catalytic core - and CF(0) - the membrane proton channel. CF(1) has five subunits: alpha(3), beta(3), gamma(1), delta(1), epsilon(1). CF(0) has three main subunits: a, b and c.

Its subcellular location is the cell membrane. The enzyme catalyses 4 Na(+)(in) + ATP + H2O = 4 Na(+)(out) + ADP + phosphate + H(+). Its activity is regulated as follows. Inhibited by nitrate. Its function is as follows. Produces ATP from ADP in the presence of a sodium ion gradient across the membrane. The alpha chain is a regulatory subunit. The polypeptide is ATP synthase subunit alpha, sodium ion specific (Acetobacterium woodii (strain ATCC 29683 / DSM 1030 / JCM 2381 / KCTC 1655 / WB1)).